Reading from the N-terminus, the 221-residue chain is Large ribosomal subunit protein bL25 (221 aa).

The tract at residues Ser174 to Glu221 is disordered. Acidic residues predominate over residues Glu184 to Glu221.

It belongs to the bacterial ribosomal protein bL25 family. CTC subfamily. As to quaternary structure, part of the 50S ribosomal subunit; part of the 5S rRNA/L5/L18/L25 subcomplex. Contacts the 5S rRNA. Binds to the 5S rRNA independently of L5 and L18.

Its function is as follows. This is one of the proteins that binds to the 5S RNA in the ribosome where it forms part of the central protuberance. This chain is Large ribosomal subunit protein bL25, found in Staphylococcus haemolyticus (strain JCSC1435).